The sequence spans 190 residues: Putative phosphatidylethanolamine-binding protein (190 aa).

The protein belongs to the phosphatidylethanolamine-binding protein family.

This is Putative phosphatidylethanolamine-binding protein from Plasmodium falciparum.